The chain runs to 404 residues: Ethanolamine-phosphate cytidylyltransferase (404 aa).

Residues 173-201 (YADSFGKPPHPTPAGDTLSSEVSSQCPGG) are disordered. Over residues 189–201 (TLSSEVSSQCPGG) the composition is skewed to polar residues. Residues 239-240 (AF), 247-250 (HVDF), Lys277, 325-328 (HGKT), and 354-358 (SGSDL) each bind CTP. Ser356 carries the post-translational modification Phosphoserine. 2 positions are modified to phosphothreonine: Thr359 and Thr360.

Belongs to the cytidylyltransferase family.

It carries out the reaction phosphoethanolamine + CTP + H(+) = CDP-ethanolamine + diphosphate. The protein operates within phospholipid metabolism; phosphatidylethanolamine biosynthesis; phosphatidylethanolamine from ethanolamine: step 2/3. Its function is as follows. Ethanolamine-phosphate cytidylyltransferase that catalyzes the second step in the synthesis of phosphatidylethanolamine (PE) from ethanolamine via the CDP-ethanolamine pathway. Phosphatidylethanolamine is a dominant inner-leaflet phospholipid in cell membranes, where it plays a role in membrane function by structurally stabilizing membrane-anchored proteins, and participates in important cellular processes such as cell division, cell fusion, blood coagulation, and apoptosis. This is Ethanolamine-phosphate cytidylyltransferase (Pcyt2) from Mus musculus (Mouse).